A 110-amino-acid polypeptide reads, in one-letter code: T cell receptor alpha variable 35 (110 aa).

The N-terminal stretch at 1 to 19 is a signal peptide; the sequence is MLLEHLLIILWMQLTWVSG. Residues 20–110 enclose the Ig-like domain; sequence QQLNQSPQSM…DVGIYFCAGQ (91 aa). N-linked (GlcNAc...) asparagine glycosylation is found at asparagine 40 and asparagine 93. Cysteines 41 and 107 form a disulfide.

Alpha-beta TR is a heterodimer composed of an alpha and beta chain; disulfide-linked. The alpha-beta TR is associated with the transmembrane signaling CD3 coreceptor proteins to form the TR-CD3 (TcR or TCR). The assembly of alpha-beta TR heterodimers with CD3 occurs in the endoplasmic reticulum where a single alpha-beta TR heterodimer associates with one CD3D-CD3E heterodimer, one CD3G-CD3E heterodimer and one CD247 homodimer forming a stable octameric structure. CD3D-CD3E and CD3G-CD3E heterodimers preferentially associate with TR alpha and TR beta chains, respectively. The association of the CD247 homodimer is the last step of TcR assembly in the endoplasmic reticulum and is required for transport to the cell surface.

Its subcellular location is the cell membrane. In terms of biological role, v region of the variable domain of T cell receptor (TR) alpha chain that participates in the antigen recognition. Alpha-beta T cell receptors are antigen specific receptors which are essential to the immune response and are present on the cell surface of T lymphocytes. Recognize peptide-major histocompatibility (MH) (pMH) complexes that are displayed by antigen presenting cells (APC), a prerequisite for efficient T cell adaptive immunity against pathogens. Binding of alpha-beta TR to pMH complex initiates TR-CD3 clustering on the cell surface and intracellular activation of LCK that phosphorylates the ITAM motifs of CD3G, CD3D, CD3E and CD247 enabling the recruitment of ZAP70. In turn ZAP70 phosphorylates LAT, which recruits numerous signaling molecules to form the LAT signalosome. The LAT signalosome propagates signal branching to three major signaling pathways, the calcium, the mitogen-activated protein kinase (MAPK) kinase and the nuclear factor NF-kappa-B (NF-kB) pathways, leading to the mobilization of transcription factors that are critical for gene expression and essential for T cell growth and differentiation. The T cell repertoire is generated in the thymus, by V-(D)-J rearrangement. This repertoire is then shaped by intrathymic selection events to generate a peripheral T cell pool of self-MH restricted, non-autoaggressive T cells. Post-thymic interaction of alpha-beta TR with the pMH complexes shapes TR structural and functional avidity. The polypeptide is T cell receptor alpha variable 35 (Homo sapiens (Human)).